A 362-amino-acid polypeptide reads, in one-letter code: Cationic peroxidase SPC4 (362 aa).

An N-terminal signal peptide occupies residues 1 to 31 (MSRAPTLAAAAAVAAVVLICSSSTATAADGN). Cystine bridges form between Cys-50-Cys-131, Cys-83-Cys-88, Cys-138-Cys-333, and Cys-218-Cys-245. Residue His-81 is the Proton acceptor of the active site. Residues Asp-82, Val-85, Gly-87, Asp-89, and Ser-91 each coordinate Ca(2+). A glycan (N-linked (GlcNAc...) asparagine) is linked at Asn-109. Residue Thr-111 coordinates (indol-3-yl)acetate. Pro-181 contacts substrate. His-211 provides a ligand contact to heme b. Ca(2+) is bound at residue Thr-212. The N-linked (GlcNAc...) asparagine glycan is linked to Asn-234. Ca(2+)-binding residues include Asp-257, Thr-260, Ala-263, and Asp-265. A glycan (N-linked (GlcNAc...) asparagine) is linked at Asn-332.

This sequence belongs to the peroxidase family. Classical plant (class III) peroxidase subfamily. In terms of assembly, monomer. Heme b is required as a cofactor. It depends on Ca(2+) as a cofactor. In terms of processing, the proportions of glycoforms I and II are 35% and 65% respectively. Present in germinated and ungerminated grain, seedlings, and leaves and stem of the mature plant.

Its subcellular location is the secreted. It catalyses the reaction 2 a phenolic donor + H2O2 = 2 a phenolic radical donor + 2 H2O. In terms of biological role, removal of H(2)O(2), oxidation of toxic reductants, biosynthesis and degradation of lignin, suberization, auxin catabolism, response to environmental stresses such as wounding, pathogen attack and oxidative stress. These functions might be dependent on each isozyme/isoform in each plant tissue. Has a high preference for hydroxycinnamates as substrates. Substrate preference is ferulic acid &gt; p-coumaric acid &gt; N-acetyl tyrosine methyl ester &gt; N-acetyl-tyrosine &gt; tyrosine &gt; catechol &gt; Gly-Tyr-Gly. May be involved in the formation of diferulate linkages in the plant cell wall. This Sorghum bicolor (Sorghum) protein is Cationic peroxidase SPC4.